We begin with the raw amino-acid sequence, 318 residues long: Bifunctional protein FolD 3 (318 aa).

Residues 173 to 175 and Ile-242 each bind NADP(+); that span reads GRS.

This sequence belongs to the tetrahydrofolate dehydrogenase/cyclohydrolase family. In terms of assembly, homodimer.

It carries out the reaction (6R)-5,10-methylene-5,6,7,8-tetrahydrofolate + NADP(+) = (6R)-5,10-methenyltetrahydrofolate + NADPH. The catalysed reaction is (6R)-5,10-methenyltetrahydrofolate + H2O = (6R)-10-formyltetrahydrofolate + H(+). Its pathway is one-carbon metabolism; tetrahydrofolate interconversion. Catalyzes the oxidation of 5,10-methylenetetrahydrofolate to 5,10-methenyltetrahydrofolate and then the hydrolysis of 5,10-methenyltetrahydrofolate to 10-formyltetrahydrofolate. This is Bifunctional protein FolD 3 from Rubrobacter xylanophilus (strain DSM 9941 / JCM 11954 / NBRC 16129 / PRD-1).